We begin with the raw amino-acid sequence, 306 residues long: Pentalenolactone F synthase (306 aa).

Histidine 110 and aspartate 112 together coordinate Fe cation. The 2-oxoglutarate site is built by threonine 138 and tryptophan 258. A Fe cation-binding site is contributed by histidine 273. Arginine 284 contacts 2-oxoglutarate.

It belongs to the TfdA dioxygenase family. The cofactor is Fe(2+).

It catalyses the reaction pentalenolactone D + 2 2-oxoglutarate + 2 O2 = pentalenolactone F + 2 succinate + 2 CO2 + H2O. The protein operates within antibiotic biosynthesis; neopentalenolactone biosynthesis. Activated by ascorbate. Functionally, catalyzes the Fe(2+) and alpha-ketoglutarate-dependent oxidation of pentalenolactone D to pentalenolactone F. Also able to catalyze the oxidation of pentalenolactone D to pentalenolactone E. In presence of neopentalenolactone D, mediates production of PL308 and possibly neopentalenolactone E. This Streptomyces avermitilis (strain ATCC 31267 / DSM 46492 / JCM 5070 / NBRC 14893 / NCIMB 12804 / NRRL 8165 / MA-4680) protein is Pentalenolactone F synthase (ptlD).